The chain runs to 671 residues: DNA ligase (671 aa).

NAD(+)-binding positions include 32-36, 81-82, and E113; these read DAEYD and SL. K115 serves as the catalytic N6-AMP-lysine intermediate. NAD(+) contacts are provided by R136, E173, K290, and K314. The Zn(2+) site is built by C408, C411, C426, and C432. One can recognise a BRCT domain in the interval 593–671; it reads EIDSPFAGKT…EAEMIRLLGA (79 aa).

Belongs to the NAD-dependent DNA ligase family. LigA subfamily. Requires Mg(2+) as cofactor. Mn(2+) serves as cofactor.

It catalyses the reaction NAD(+) + (deoxyribonucleotide)n-3'-hydroxyl + 5'-phospho-(deoxyribonucleotide)m = (deoxyribonucleotide)n+m + AMP + beta-nicotinamide D-nucleotide.. Functionally, DNA ligase that catalyzes the formation of phosphodiester linkages between 5'-phosphoryl and 3'-hydroxyl groups in double-stranded DNA using NAD as a coenzyme and as the energy source for the reaction. It is essential for DNA replication and repair of damaged DNA. The protein is DNA ligase of Salmonella paratyphi C (strain RKS4594).